We begin with the raw amino-acid sequence, 779 residues long: MQQALELALDRAEYVIESARQRPPKRKYLSSGRKSVFQKLYDLYIEECEKEPEVKKLRRNVNLLEKLVMQETLSCLVVNLYPGNEGYSLMLRGKNGSDSETIRLPYEEGELLEYLDAEELPPILVDLLEKSQVNIFHCGCVIAEIRDYRQSSNMKSPGYQSRHILLRPTMQTLICDVHSITSDNHKWTQEDKLLLESQLILATAEPLCLDPSIAVTCTANRLLYNKQKMNTRPMKRCFKRYSRSSLNRQQDLSHCPPPPQLRLLDFLQKRKERKAGQHYDLKISKAGNCVDMWKRSPCNLAIPSEVDVEKYAKVEKSIKSDDSQPTVWPAHDVKDDYVFECEAGTQYQKTKLTILQSLGDPLYYGKIQPCKADEESDSQMSPSHSSTDDHSNWFIIGSKTDAERVVNQYQELVQNEAKCPVKMSHSSSGSASLSQVSPGKETDQTETVSVQSSVLGKGVKHRPPPIKLPSSSGNSSSGNYFTPQQTSSFLKSPTPPPSSKPSSIPRKSSVDLNQVSMLSPAALSPASSSQRTTATQVMANSAGLNFINVVGSVCGAQALMSGSNPMLGCNTGAITPAGINLSGLLPSGGLLPNALPSAMQAASQAGVPFGLKNTSSLRPLNLLQLPGGSLIFNTLQQQQQQLSQFTPQQPQQPTTCSPQQPGEQGSEQGSTSQEQALSAQQAAVINLTGVGSFMQSQAAVLSQLGSAENRPEQSLPQQRFQLSSAFQQQQQQIQQLRFLQHQMAMAAAAAQTAQLHHHRHTGSQSKSKMKRGTPTTPKF.

The residue at position 296 (serine 296) is a Phosphoserine. Disordered stretches follow at residues 373-392 (DEES…DHSN) and 420-507 (PVKM…IPRK). Positions 424–437 (SHSSSGSASLSQVS) are enriched in low complexity. The span at 445–454 (TETVSVQSSV) shows a compositional bias: polar residues. Residues 470 to 479 (SSSGNSSSGN) show a composition bias toward low complexity. Threonine 494 carries the phosphothreonine modification. A phosphoserine mark is found at serine 519 and serine 524. Disordered regions lie at residues 641-677 (QLSQ…EQAL) and 755-779 (LHHH…TPKF). Over residues 755–771 (LHHHRHTGSQSKSKMKR) the composition is skewed to basic residues.

This sequence belongs to the SPT20 family. In terms of assembly, interacts with MAPK14. Interacts with ATG9A. As to expression, highly expressed in testis, moderately in brain and pituitary gland. Expressed in several fetal tissues, including lung, brain, thymus and kidney. Expression is down-regulated in malignant prostate tissues.

It localises to the nucleus. Functionally, required for MAP kinase p38 (MAPK11, MAPK12, MAPK13 and/or MAPK14) activation during gastrulation. Required for down-regulation of E-cadherin during gastrulation by regulating E-cadherin protein level downstream from NCK-interacting kinase (NIK) and independently of the regulation of transcription by FGF signaling and Snail. Required for starvation-induced ATG9A trafficking during autophagy. The sequence is that of Transcription factor SPT20 homolog (SUPT20H) from Homo sapiens (Human).